The following is an 822-amino-acid chain: Adhesion G protein-coupled receptor E2 (822 aa).

The first 18 residues, methionine 1–alanine 18, serve as a signal peptide directing secretion. The Extracellular segment spans residues glutamate 19 to threonine 530. An EGF-like 1 domain is found at aspartate 22–aspartate 63. 5 cysteine pairs are disulfide-bonded: cysteine 26-cysteine 36, cysteine 30-cysteine 42, cysteine 44-cysteine 62, cysteine 68-cysteine 82, and cysteine 76-cysteine 91. 2 N-linked (GlcNAc...) asparagine glycosylation sites follow: asparagine 33 and asparagine 38. The EGF-like 1; calcium-binding domain occupies aspartate 64 to alanine 103. Residue asparagine 108 is glycosylated (N-linked (GlcNAc...) asparagine). An EGF-like 2; calcium-binding domain is found at aspartate 116–threonine 159. 5 disulfide bridges follow: cysteine 120–cysteine 133, cysteine 127–cysteine 142, cysteine 144–cysteine 158, cysteine 164–cysteine 177, and cysteine 171–cysteine 186. The 39-residue stretch at aspartate 160–serine 198 folds into the EGF-like 3; calcium-binding domain. N-linked (GlcNAc...) asparagine glycosylation is found at asparagine 203, asparagine 222, asparagine 351, asparagine 371, asparagine 427, asparagine 449, and asparagine 453. The EGF-like 4; calcium-binding domain occupies aspartate 209–isoleucine 247. Intrachain disulfides connect cysteine 213-cysteine 226 and cysteine 220-cysteine 235. One can recognise a GAIN-B domain in the interval asparagine 351–glutamine 523. Disulfide bonds link cysteine 475/cysteine 505 and cysteine 493/cysteine 507. The tract at residues cysteine 475 to glutamine 523 is GPS. The chain crosses the membrane as a helical span at residues valine 531–phenylalanine 551. At leucine 552–threonine 562 the chain is on the cytoplasmic side. Residues serine 563–isoleucine 583 form a helical membrane-spanning segment. Residues aspartate 584–glutamate 589 lie on the Extracellular side of the membrane. A helical membrane pass occupies residues valine 590–methionine 610. Residues leucine 611–lysine 637 lie on the Cytoplasmic side of the membrane. A helical membrane pass occupies residues lysine 638–serine 658. Topologically, residues arginine 659 to glycine 676 are extracellular. The chain crosses the membrane as a helical span at residues phenylalanine 677 to leucine 697. Over valine 698–threonine 728 the chain is Cytoplasmic. Residues alanine 729–alanine 749 form a helical membrane-spanning segment. At arginine 750–alanine 753 the chain is on the extracellular side. Residues tyrosine 754–leucine 774 form a helical membrane-spanning segment. At serine 775–serine 822 the chain is on the cytoplasmic side. The interval glutamate 797 to serine 822 is disordered.

The protein belongs to the G-protein coupled receptor 2 family. Adhesion G-protein coupled receptor (ADGR) subfamily. In terms of assembly, forms a heterodimer, consisting of a large extracellular region non-covalently linked to a seven-transmembrane moiety. Interacts with chondroitin sulfate; the interaction with chondroitin sulfate is calcium-dependent. Interacts with CD55. In terms of processing, autoproteolytically cleaved into 2 subunits, an extracellular alpha subunit and a seven-transmembrane beta subunit.

The protein resides in the cell membrane. The protein localises to the cell projection. It localises to the ruffle membrane. Cell surface receptor that binds to the chondroitin sulfate moiety of glycosaminoglycan chains and promotes cell attachment. Promotes granulocyte chemotaxis, degranulation and adhesion. In macrophages, promotes the release of inflammatory cytokines, including IL8 and TNF. Signals probably through G-proteins. This chain is Adhesion G protein-coupled receptor E2 (ADGRE2), found in Macaca mulatta (Rhesus macaque).